The chain runs to 323 residues: L-lactate dehydrogenase 1 (323 aa).

NAD(+) is bound by residues Val18, Asp39, Tyr69, and 83 to 84 (GA). Substrate is bound by residues Gln86 and Arg92. NAD(+) contacts are provided by residues Ser105, 122–124 (VAN), and Ser147. Residue 124–127 (NPVD) coordinates substrate. 152–155 (DTGR) is a substrate binding site. Residue His179 is the Proton acceptor of the active site. Position 223 is a phosphotyrosine (Tyr223). Thr232 contacts substrate.

It belongs to the LDH/MDH superfamily. LDH family. Homotetramer.

The protein resides in the cytoplasm. It catalyses the reaction (S)-lactate + NAD(+) = pyruvate + NADH + H(+). Its pathway is fermentation; pyruvate fermentation to lactate; (S)-lactate from pyruvate: step 1/1. Functionally, catalyzes the conversion of lactate to pyruvate. The polypeptide is L-lactate dehydrogenase 1 (Lactobacillus acidophilus (strain ATCC 700396 / NCK56 / N2 / NCFM)).